Here is a 523-residue protein sequence, read N- to C-terminus: 2-isopropylmalate synthase (523 aa).

Residues 5-267 (VIIFDTTLRD…HTNINHHEIW (263 aa)) form the Pyruvate carboxyltransferase domain. Asp-14, His-202, His-204, and Asn-238 together coordinate Mn(2+). The interval 392-523 (RLDYFSVQSG…QNKENNKETV (132 aa)) is regulatory domain.

Belongs to the alpha-IPM synthase/homocitrate synthase family. LeuA type 1 subfamily. Homodimer. It depends on Mn(2+) as a cofactor.

Its subcellular location is the cytoplasm. The enzyme catalyses 3-methyl-2-oxobutanoate + acetyl-CoA + H2O = (2S)-2-isopropylmalate + CoA + H(+). It functions in the pathway amino-acid biosynthesis; L-leucine biosynthesis; L-leucine from 3-methyl-2-oxobutanoate: step 1/4. Functionally, catalyzes the condensation of the acetyl group of acetyl-CoA with 3-methyl-2-oxobutanoate (2-ketoisovalerate) to form 3-carboxy-3-hydroxy-4-methylpentanoate (2-isopropylmalate). This chain is 2-isopropylmalate synthase, found in Salmonella typhi.